The sequence spans 319 residues: ATP-dependent 6-phosphofructokinase (319 aa).

Gly11 contacts ATP. ADP is bound at residue 21 to 25; the sequence is RAVVR. ATP is bound by residues 72 to 73 and 102 to 105; these read RC and GDGS. Asp103 contributes to the Mg(2+) binding site. 125 to 127 lines the substrate pocket; the sequence is TID. Asp127 serves as the catalytic Proton acceptor. Residue Arg154 participates in ADP binding. Substrate is bound by residues Arg162 and 169-171; that span reads MGR. Residues 185-187, Arg211, and 213-215 contribute to the ADP site; these read GAE and KKH. Residues Glu222, Arg243, and 249-252 contribute to the substrate site; that span reads HIQR.

Belongs to the phosphofructokinase type A (PFKA) family. ATP-dependent PFK group I subfamily. Prokaryotic clade 'B1' sub-subfamily. Homotetramer. Component of a possible RNA degradosome complex composed of rny, rnjA, rnjB, pnp, pfkA and eno (although rnjA and rnjB's presence is unclear). Specifically interacts with RNase Y (rny, PubMed:21803996) and enolase (eno, PubMed:22198292). Interacts with BrxC. The cofactor is Mg(2+).

The protein resides in the cytoplasm. The enzyme catalyses beta-D-fructose 6-phosphate + ATP = beta-D-fructose 1,6-bisphosphate + ADP + H(+). It functions in the pathway carbohydrate degradation; glycolysis; D-glyceraldehyde 3-phosphate and glycerone phosphate from D-glucose: step 3/4. Its activity is regulated as follows. Allosterically activated by ADP and other diphosphonucleosides, and allosterically inhibited by phosphoenolpyruvate. Its function is as follows. Catalyzes the phosphorylation of D-fructose 6-phosphate to fructose 1,6-bisphosphate by ATP, the first committing step of glycolysis. This Bacillus subtilis (strain 168) protein is ATP-dependent 6-phosphofructokinase.